A 151-amino-acid polypeptide reads, in one-letter code: Aspartate carbamoyltransferase regulatory chain (151 aa).

Cys107, Cys112, Cys135, and Cys138 together coordinate Zn(2+).

It belongs to the PyrI family. In terms of assembly, contains catalytic and regulatory chains. Zn(2+) serves as cofactor.

In terms of biological role, involved in allosteric regulation of aspartate carbamoyltransferase. The polypeptide is Aspartate carbamoyltransferase regulatory chain (Psychromonas ingrahamii (strain DSM 17664 / CCUG 51855 / 37)).